The sequence spans 344 residues: L-lactate dehydrogenase B (344 aa).

Residues 62–67 (DALPDK) and Arg-109 contribute to the NAD(+) site. Substrate contacts are provided by Arg-116, Asn-148, and Arg-179. Position 148 (Asn-148) interacts with NAD(+). The Proton acceptor role is filled by His-203. Thr-258 provides a ligand contact to substrate.

Belongs to the LDH/MDH superfamily. LDH family. In terms of assembly, tetramer that arise from random association of LDH-A and LDH-B.

It catalyses the reaction (S)-lactate + NAD(+) = pyruvate + NADH + H(+). Its pathway is fermentation; pyruvate fermentation to lactate; (S)-lactate from pyruvate: step 1/1. This is L-lactate dehydrogenase B from Hordeum vulgare (Barley).